We begin with the raw amino-acid sequence, 424 residues long: Tyrosine--tRNA ligase (424 aa).

Tyrosine 37 lines the L-tyrosine pocket. The 'HIGH' region motif lies at 42–51 (PTADSLHLGH). L-tyrosine-binding residues include tyrosine 174 and glutamine 178. The 'KMSKS' region motif lies at 234–238 (KFGKT). Lysine 237 contacts ATP. Positions 357 to 414 (TGLIDALVASGLAKSKSEARTFIQSGSVAINGNKAEALDHAIGGDELLYGRFTILRRG) constitute an S4 RNA-binding domain.

This sequence belongs to the class-I aminoacyl-tRNA synthetase family. TyrS type 1 subfamily. Homodimer.

Its subcellular location is the cytoplasm. The enzyme catalyses tRNA(Tyr) + L-tyrosine + ATP = L-tyrosyl-tRNA(Tyr) + AMP + diphosphate + H(+). Functionally, catalyzes the attachment of tyrosine to tRNA(Tyr) in a two-step reaction: tyrosine is first activated by ATP to form Tyr-AMP and then transferred to the acceptor end of tRNA(Tyr). This Dechloromonas aromatica (strain RCB) protein is Tyrosine--tRNA ligase.